Consider the following 104-residue polypeptide: Thioredoxin (104 aa).

Residues 2–104 (AIVKATDQSF…ALQELVNKHL (103 aa)) enclose the Thioredoxin domain. Cys-29 and Cys-32 are joined by a disulfide.

This sequence belongs to the thioredoxin family.

Its function is as follows. Participates in various redox reactions through the reversible oxidation of its active center dithiol to a disulfide and catalyzes dithiol-disulfide exchange reactions. The sequence is that of Thioredoxin (trxA) from Bacillus subtilis (strain 168).